We begin with the raw amino-acid sequence, 806 residues long: Mitogen-activated protein kinase 7 (806 aa).

The interval methionine 1–alanine 23 is disordered. Alanine 2 carries the N-acetylalanine modification. The segment at alanine 2–threonine 77 is required for cytoplasmic targeting. A Protein kinase domain is found at tyrosine 55 to leucine 347. ATP contacts are provided by residues isoleucine 61–valine 69 and lysine 84. A required for binding to MAP2K5 region spans residues glycine 78–leucine 139. The segment at methionine 140–glutamine 406 is necessary for oligomerization. The Proton acceptor role is filled by aspartate 182. The TXY motif lies at threonine 219–tyrosine 221. The segment at proline 407–proline 806 is may not be required for kinase activity; required to stimulate MEF2C activity. Disordered regions lie at residues alanine 424–aspartate 473 and arginine 488–serine 727. The segment covering serine 433 to aspartate 443 has biased composition (pro residues). Basic and acidic residues-rich tracts occupy residues proline 502–glutamate 519, arginine 527–glycine 544, and aspartate 563–threonine 573. The Nuclear localization signal motif lies at arginine 505–glutamate 539. A compositionally biased stretch (pro residues) spans proline 578–alanine 592. A compositionally biased stretch (low complexity) spans proline 593–threonine 603. The span at valine 627–alanine 643 shows a compositional bias: pro residues. Residues threonine 647–valine 660 are compositionally biased toward polar residues. Positions proline 678 to threonine 689 are enriched in pro residues. Over residues serine 693–serine 710 the composition is skewed to polar residues. Serine 710 is subject to Phosphoserine. Phosphothreonine is present on threonine 723.

It belongs to the protein kinase superfamily. CMGC Ser/Thr protein kinase family. MAP kinase subfamily. As to quaternary structure, interacts with MAP2K5. Forms oligomers. Interacts with MEF2A, MEF2C and MEF2D; the interaction phosphorylates the MEF2s and enhances transcriptional activity of MEF2A, MEF2C but not MEF2D. Interacts with SGK1. Interacts with PML. Interacts (via N-terminal half) with HSP90AB1-CDC37 chaperone complex in resting cells; the interaction is MAP2K5-independent and prevents MAPK7 from ubiquitination and proteasomal degradation. Interacts with STUB1/CHIP; the interaction is enhanced in the presence of IGF1 or MAP2K5 and promotes STUB1/CHIP E3 ligase activity. Requires Mg(2+) as cofactor. Post-translationally, dually phosphorylated on Thr-219 and Tyr-221, which activates the enzyme. As to expression, detected in testis, brain, kidney, lung and heart. Detected in total embryo (at protein level).

Its subcellular location is the cytoplasm. The protein localises to the nucleus. It is found in the PML body. The catalysed reaction is L-seryl-[protein] + ATP = O-phospho-L-seryl-[protein] + ADP + H(+). It carries out the reaction L-threonyl-[protein] + ATP = O-phospho-L-threonyl-[protein] + ADP + H(+). Activated by tyrosine and threonine phosphorylation. Activated in response to hyperosmolarity, hydrogen peroxide, and epidermal growth factor (EGF). Its function is as follows. Plays a role in various cellular processes such as proliferation, differentiation and cell survival. The upstream activator of MAPK7 is the MAPK kinase MAP2K5. Upon activation, it translocates to the nucleus and phosphorylates various downstream targets including MEF2C. EGF activates MAPK7 through a Ras-independent and MAP2K5-dependent pathway. As part of the MAPK/ERK signaling pathway, acts as a negative regulator of apoptosis in cardiomyocytes via interaction with STUB1/CHIP and promotion of STUB1-mediated ubiquitination and degradation of ICER-type isoforms of CREM. May have a role in muscle cell differentiation. May be important for endothelial function and maintenance of blood vessel integrity. MAP2K5 and MAPK7 interact specifically with one another and not with MEK1/ERK1 or MEK2/ERK2 pathways. Phosphorylates SGK1 at Ser-78 and this is required for growth factor-induced cell cycle progression. Involved in the regulation of p53/TP53 by disrupting the PML-MDM2 interaction. The polypeptide is Mitogen-activated protein kinase 7 (Mapk7) (Mus musculus (Mouse)).